We begin with the raw amino-acid sequence, 479 residues long: Ribosomal RNA small subunit methyltransferase F (479 aa).

S-adenosyl-L-methionine-binding positions include 125–131 (AAAPGSK), E149, G177, and D194. Residue C247 is the Nucleophile of the active site.

It belongs to the class I-like SAM-binding methyltransferase superfamily. RsmB/NOP family.

The protein resides in the cytoplasm. It catalyses the reaction cytidine(1407) in 16S rRNA + S-adenosyl-L-methionine = 5-methylcytidine(1407) in 16S rRNA + S-adenosyl-L-homocysteine + H(+). Functionally, specifically methylates the cytosine at position 1407 (m5C1407) of 16S rRNA. This chain is Ribosomal RNA small subunit methyltransferase F, found in Shigella flexneri serotype 5b (strain 8401).